The sequence spans 328 residues: 3-dehydroquinate synthase (328 aa).

Belongs to the archaeal-type DHQ synthase family.

It carries out the reaction 2-amino-2,3,7-trideoxy-D-lyxo-hept-6-ulosonate + NAD(+) + H2O = 3-dehydroquinate + NH4(+) + NADH + H(+). Functionally, catalyzes the oxidative deamination and cyclization of 2-amino-3,7-dideoxy-D-threo-hept-6-ulosonic acid (ADH) to yield 3-dehydroquinate (DHQ), which is fed into the canonical shikimic pathway of aromatic amino acid biosynthesis. This Methanosphaerula palustris (strain ATCC BAA-1556 / DSM 19958 / E1-9c) protein is 3-dehydroquinate synthase.